The chain runs to 37 residues: Large ribosomal subunit protein bL36 (37 aa).

The protein belongs to the bacterial ribosomal protein bL36 family.

The chain is Large ribosomal subunit protein bL36 from Paracidovorax citrulli (strain AAC00-1) (Acidovorax citrulli).